Here is a 457-residue protein sequence, read N- to C-terminus: MSGTRASNDRPPGAGGVKRGRLQQEAAATGSRVTVVLGAQWGDEGKGKVVDLLATDADIISRCQGGNNAGHTVVVDGKEYDFHLLPSGIINTKAVSFIGNGVVIHLPGLFEEAEKNEKKGLKDWEKRLIISDRAHLVFDFHQAVDGLQEVQRQAQEGKNIGTTKKGIGPTYSSKAARTGLRICDLLSDFDEFSSRFKNLAHQHQSMFPTLEIDIEGQLKRLKGFAERIRPMVRDGVYFMYEALHGPPKKILVEGANAALLDIDFGTYPFVTSSNCTVGGVCTGLGIPPQNIGDVYGVVKAYTTRVGIGAFPTEQINEIGGLLQTRGHEWGVTTGRKRRCGWLDLMILRYAHMVNGFTALALTKLDILDVLGEVKVGVSYKLNGKRIPYFPANQEMLQKVEVEYETLPGWKADTTGARRWEDLPPQAQNYIRFVENHVGVAVKWVGVGKSRESMIQLF.

The disordered stretch occupies residues 1-21 (MSGTRASNDRPPGAGGVKRGR). GTP contacts are provided by residues 42–48 (GDEGKGK) and 70–72 (GHT). Residue Asp-43 is the Proton acceptor of the active site. Residues Asp-43 and Gly-70 each contribute to the Mg(2+) site. Residue Asp-43 coordinates substrate. Residues 43–46 (DEGK), 68–71 (NAGH), Thr-163, Arg-177, Asn-256, Thr-271, and Arg-335 each bind IMP. His-71 functions as the Proton donor in the catalytic mechanism. 331–337 (VTTGRKR) is a binding site for substrate. GTP is bound by residues Arg-337, 363 to 365 (KLD), and 445 to 448 (GVGK).

This sequence belongs to the adenylosuccinate synthetase family. Homodimer. It depends on Mg(2+) as a cofactor. In terms of tissue distribution, predominantly expressed in skeletal muscle and heart, as well as in several hematopoietic cell lines and solid tumors.

The protein localises to the cytoplasm. The catalysed reaction is IMP + L-aspartate + GTP = N(6)-(1,2-dicarboxyethyl)-AMP + GDP + phosphate + 2 H(+). The protein operates within purine metabolism; AMP biosynthesis via de novo pathway; AMP from IMP: step 1/2. Its function is as follows. Component of the purine nucleotide cycle (PNC), which interconverts IMP and AMP to regulate the nucleotide levels in various tissues, and which contributes to glycolysis and ammoniagenesis. Catalyzes the first committed step in the biosynthesis of AMP from IMP. The protein is Adenylosuccinate synthetase isozyme 1 of Homo sapiens (Human).